A 241-amino-acid chain; its full sequence is Zinc finger CCHC domain-containing protein 24 (241 aa).

Phosphoserine is present on residues Ser-65 and Ser-93. The CCHC-type zinc finger occupies 132-149; the sequence is YLCHLCFNKGHYIKDCPQ.

This is Zinc finger CCHC domain-containing protein 24 (ZCCHC24) from Homo sapiens (Human).